Consider the following 164-residue polypeptide: Succinate dehydrogenase assembly factor 2, mitochondrial (164 aa).

Belongs to the SDHAF2 family. In terms of assembly, interacts with the flavoprotein subunit within the SDH catalytic dimer.

Its subcellular location is the mitochondrion matrix. In terms of biological role, plays an essential role in the assembly of succinate dehydrogenase (SDH), an enzyme complex (also referred to as respiratory complex II) that is a component of both the tricarboxylic acid (TCA) cycle and the mitochondrial electron transport chain, and which couples the oxidation of succinate to fumarate with the reduction of ubiquinone (coenzyme Q) to ubiquinol. Required for flavinylation (covalent attachment of FAD) of the flavoprotein subunit of the SDH catalytic dimer. The polypeptide is Succinate dehydrogenase assembly factor 2, mitochondrial (Lodderomyces elongisporus (strain ATCC 11503 / CBS 2605 / JCM 1781 / NBRC 1676 / NRRL YB-4239) (Yeast)).